A 259-amino-acid polypeptide reads, in one-letter code: Protein BEAN1 (259 aa).

A helical transmembrane segment spans residues 36-56 (VLVASAVIGVVIILSCITIIV). Over residues 71–89 (RHRHHRHHHHHHHHRRRRH) the composition is skewed to basic residues. Disordered stretches follow at residues 71-91 (RHRHHRHHHHHHHHRRRRHRE) and 152-259 (VGPG…ERIV). Polar residues predominate over residues 171 to 187 (LTDSCPTLDGTSDSGSG). A compositionally biased stretch (low complexity) spans 221-230 (GAGPPSGLLP).

As to quaternary structure, interacts with NEDD4.

Its subcellular location is the membrane. The chain is Protein BEAN1 (BEAN1) from Homo sapiens (Human).